The following is a 244-amino-acid chain: MSPVASTRWCPTPEQLMILEEMYRSGIRTPNAVQIQQITAHLAFYGRIEGKNVFYWFQNHKARDRQKLRKKLAKQLHQQQHQLQLQLQQIKPKPISSMISQPVNKNIIDHHNPYHHHHHNHHHNHHRPYDHMSFDCCSHPSPMCLPHQGTGVGEAPSKVMNEYYCTKSGAEEILMQKSITGPNSSYGRDWMMMMDMGPRPSYPSSSSSPISCCNMMMSSPKIPLKTLELFPISSINSKQDSTKL.

The segment at residues 4–68 (VASTRWCPTP…NHKARDRQKL (65 aa)) is a DNA-binding region (homeobox; WUS-type).

This sequence belongs to the WUS homeobox family. As to expression, expressed in aerial parts of seedlings, inflorescences and flowers at low level. Expressed in a restricted number of L1 cells at the lateral regions of flower primordia.

The protein resides in the nucleus. In terms of biological role, probable transcription factor required to initiate organ founder cells in a lateral domain of shoot meristems. Involved in the lateral sepal axis-dependent development of flowers, probably by regulating the proliferation of L1 cells at the lateral region of flower primordia. Required for the formation of the margin cells of the first and second whorl organs. This Arabidopsis thaliana (Mouse-ear cress) protein is WUSCHEL-related homeobox 3 (WOX3).